We begin with the raw amino-acid sequence, 126 residues long: Glycine cleavage system H protein (126 aa).

The Lipoyl-binding domain occupies 22 to 104 (TVTIGVTDFA…YGEGWMIKIK (83 aa)). The residue at position 63 (K63) is an N6-lipoyllysine.

Belongs to the GcvH family. The glycine cleavage system is composed of four proteins: P, T, L and H. Requires (R)-lipoate as cofactor.

In terms of biological role, the glycine cleavage system catalyzes the degradation of glycine. The H protein shuttles the methylamine group of glycine from the P protein to the T protein. The sequence is that of Glycine cleavage system H protein from Christiangramia forsetii (strain DSM 17595 / CGMCC 1.15422 / KT0803) (Gramella forsetii).